A 243-amino-acid polypeptide reads, in one-letter code: Coproheme decarboxylase (243 aa).

Y145 is a catalytic residue. Residue H168 participates in Fe-coproporphyrin III binding.

This sequence belongs to the ChdC family. Type 2 subfamily. Fe-coproporphyrin III serves as cofactor.

It catalyses the reaction Fe-coproporphyrin III + 2 H2O2 + 2 H(+) = heme b + 2 CO2 + 4 H2O. The enzyme catalyses Fe-coproporphyrin III + H2O2 + H(+) = harderoheme III + CO2 + 2 H2O. The catalysed reaction is harderoheme III + H2O2 + H(+) = heme b + CO2 + 2 H2O. Its pathway is porphyrin-containing compound metabolism; protoheme biosynthesis. In terms of biological role, involved in coproporphyrin-dependent heme b biosynthesis. Catalyzes the decarboxylation of Fe-coproporphyrin III (coproheme) to heme b (protoheme IX), the last step of the pathway. The reaction occurs in a stepwise manner with a three-propionate intermediate. The chain is Coproheme decarboxylase from Streptomyces coelicolor (strain ATCC BAA-471 / A3(2) / M145).